A 287-amino-acid chain; its full sequence is Thioredoxin-related transmembrane protein 2 (287 aa).

The first 35 residues, 1–35 (MAVLAPLLAFLYAVPGLLRWVSQPYYLLSALLSVS), serve as a signal peptide directing secretion. The Extracellular portion of the chain corresponds to 36–112 (FLLVRKVPPV…ILFFRLDLRM (77 aa)). The helical transmembrane segment at 113–133 (GLLYITLCIVFLMTCKPPLYL) threads the bilayer. Residues 134-287 (GPEHIKYFSD…NEYNDSKKDQ (154 aa)) are Cytoplasmic-facing. In terms of domain architecture, Thioredoxin spans 135–269 (PEHIKYFSDK…LYQKAKKIRK (135 aa)). The Di-lysine motif signature appears at 284–287 (KKDQ).

In terms of assembly, monomer. Homodimer; disulfide-linked. Occurs in both reduced and oxidized monomeric form. Oxidative conditions increase homodimerization.

Its subcellular location is the endoplasmic reticulum membrane. The protein localises to the mitochondrion membrane. In terms of biological role, endoplasmic reticulum and mitochondria-associated protein that probably functions as a regulator of cellular redox state and thereby regulates protein post-translational modification, protein folding and mitochondrial activity. This is Thioredoxin-related transmembrane protein 2 (tmx2) from Xenopus tropicalis (Western clawed frog).